The following is a 244-amino-acid chain: 7-cyano-7-deazaguanine synthase (244 aa).

Residue 14–24 coordinates ATP; it reads FSGGQDSATCV. The Zn(2+) site is built by C202, C217, C220, and C223.

This sequence belongs to the QueC family. The cofactor is Zn(2+).

The enzyme catalyses 7-carboxy-7-deazaguanine + NH4(+) + ATP = 7-cyano-7-deazaguanine + ADP + phosphate + H2O + H(+). It functions in the pathway purine metabolism; 7-cyano-7-deazaguanine biosynthesis. Catalyzes the ATP-dependent conversion of 7-carboxy-7-deazaguanine (CDG) to 7-cyano-7-deazaguanine (preQ(0)). In Burkholderia mallei (strain NCTC 10229), this protein is 7-cyano-7-deazaguanine synthase.